A 727-amino-acid polypeptide reads, in one-letter code: NADH-ubiquinone oxidoreductase 75 kDa subunit, mitochondrial (727 aa).

The transit peptide at 1–23 directs the protein to the mitochondrion; sequence MLRIPVKRALIGLSKSPKGYVRS. A 2Fe-2S ferredoxin-type domain is found at 30 to 108; sequence NLIEVFVDGQ…GWNILTNSEK (79 aa). 3 residues coordinate [2Fe-2S] cluster: cysteine 64, cysteine 75, and cysteine 78. Lysine 84 bears the N6-acetyllysine mark. A [2Fe-2S] cluster-binding site is contributed by cysteine 92. In terms of domain architecture, 4Fe-4S His(Cys)3-ligated-type spans 108 to 147; it reads KSKKAREGVMEFLLANHPLDCPICDQGGECDLQDQSMMFG. Residues histidine 124, cysteine 128, cysteine 131, cysteine 137, cysteine 176, cysteine 179, cysteine 182, and cysteine 226 each contribute to the [4Fe-4S] cluster site. The 4Fe-4S Mo/W bis-MGD-type domain occupies 245 to 301; that stretch reads TRKTESIDVMDAVGSNIVVSTRTGEVMRILPRMHEDINEEWISDKTRFAYDGLKRQR. 2 positions are modified to N6-acetyllysine: lysine 499 and lysine 709.

It belongs to the complex I 75 kDa subunit family. In terms of assembly, core subunit of respiratory chain NADH dehydrogenase (Complex I) which is composed of 45 different subunits. This is the largest subunit of complex I and it is a component of the iron-sulfur (IP) fragment of the enzyme. Complex I associates with ubiquinol-cytochrome reductase complex (Complex III) to form supercomplexes. Interacts with MDM2 and AKAP1. The cofactor is [2Fe-2S] cluster. It depends on [4Fe-4S] cluster as a cofactor.

It is found in the mitochondrion inner membrane. It catalyses the reaction a ubiquinone + NADH + 5 H(+)(in) = a ubiquinol + NAD(+) + 4 H(+)(out). In terms of biological role, core subunit of the mitochondrial membrane respiratory chain NADH dehydrogenase (Complex I) which catalyzes electron transfer from NADH through the respiratory chain, using ubiquinone as an electron acceptor. Essential for catalysing the entry and efficient transfer of electrons within complex I. Plays a key role in the assembly and stability of complex I and participates in the association of complex I with ubiquinol-cytochrome reductase complex (Complex III) to form supercomplexes. The protein is NADH-ubiquinone oxidoreductase 75 kDa subunit, mitochondrial (Ndufs1) of Rattus norvegicus (Rat).